Reading from the N-terminus, the 99-residue chain is Class II hydrophobin B (99 aa).

The first 15 residues, M1–A15, serve as a signal peptide directing secretion. Disulfide bonds link C30–C79 and C40–C70.

Belongs to the cerato-ulmin hydrophobin family.

The protein resides in the secreted. It is found in the cell wall. Its subcellular location is the vacuole. It localises to the cytoplasmic vesicle. In terms of biological role, aerial growth, conidiation, and dispersal of filamentous fungi in the environment rely upon a capability of their secreting small amphipathic proteins called hydrophobins (HPBs) with low sequence identity. Class I can self-assemble into an outermost layer of rodlet bundles on aerial cell surfaces, conferring cellular hydrophobicity that supports fungal growth, development and dispersal; whereas Class II form highly ordered films at water-air interfaces through intermolecular interactions but contribute nothing to the rodlet structure. Hyd2B contributes to certain cell wall-related features, such as hydrophobicity but is not involved in cell wall-related events during fungal proliferation in host hemocoel. Does not contribute to conidial hydrophobicity. Involved in insect hemocoel colonization independent of cell hydrophobicity. The protein is Class II hydrophobin B of Beauveria bassiana (strain ARSEF 2860) (White muscardine disease fungus).